Reading from the N-terminus, the 317-residue chain is MTSLTNSLNPAQTLAPASNGDVADFFALLKPRVMALVVFTALVGMTVSPSHVNPVIGAVSLLMIAVGAGASGCLNMWWDADIDAVMTRTRSRPIPAGRIRPEEALTFGLVLAVGSVLMLGLAANWLAAGLLAFTIVFYTVIYSMWLKRATAQNIVIGGAAGALPPMIGQAVVTGSVGIEGIILFLIIFIWTPPHFWALALVKSADYAKAGIPMMPNVAGPDSTRRQIVGYTLLLAPLGLAPVALGFGGLIYGLVALLGGLAMLVLSLQVHRRREGESADKAAMSLFGFSILYLFLLFSALLAEQGLGLMRPIPVLLG.

6 consecutive transmembrane segments (helical) span residues 25–45 (FFAL…LVGM), 54–74 (PVIG…SGCL), 117–137 (LMLG…TIVF), 167–189 (IGQA…IIFI), 244–264 (LGFG…AMLV), and 281–301 (AAMS…SALL).

The protein belongs to the UbiA prenyltransferase family. Protoheme IX farnesyltransferase subfamily.

Its subcellular location is the cell inner membrane. It carries out the reaction heme b + (2E,6E)-farnesyl diphosphate + H2O = Fe(II)-heme o + diphosphate. It participates in porphyrin-containing compound metabolism; heme O biosynthesis; heme O from protoheme: step 1/1. Functionally, converts heme B (protoheme IX) to heme O by substitution of the vinyl group on carbon 2 of heme B porphyrin ring with a hydroxyethyl farnesyl side group. This is Protoheme IX farnesyltransferase from Methylobacterium nodulans (strain LMG 21967 / CNCM I-2342 / ORS 2060).